The primary structure comprises 291 residues: Flavin-dependent thymidylate synthase (291 aa).

Positions 31-241 (GFVRVVDYMG…PMVHAAFVEY (211 aa)) constitute a ThyX domain. FAD contacts are provided by residues S77, 100 to 102 (RHR), and E108. Residues 97–100 (QWVR), 108–112 (EYSAR), and R180 contribute to the dUMP site. The ThyX motif motif lies at 100-110 (RHRTASINEYS). 196–198 (NLH) provides a ligand contact to FAD. A dUMP-binding site is contributed by R207. The Involved in ionization of N3 of dUMP, leading to its activation role is filled by R207.

Belongs to the thymidylate synthase ThyX family. Homotetramer. FAD is required as a cofactor.

The catalysed reaction is dUMP + (6R)-5,10-methylene-5,6,7,8-tetrahydrofolate + NADPH + H(+) = dTMP + (6S)-5,6,7,8-tetrahydrofolate + NADP(+). It participates in pyrimidine metabolism; dTTP biosynthesis. Its function is as follows. Catalyzes the reductive methylation of 2'-deoxyuridine-5'-monophosphate (dUMP) to 2'-deoxythymidine-5'-monophosphate (dTMP) while utilizing 5,10-methylenetetrahydrofolate (mTHF) as the methyl donor, and NADPH and FADH(2) as the reductant. This is Flavin-dependent thymidylate synthase from Anaplasma marginale (strain St. Maries).